A 254-amino-acid polypeptide reads, in one-letter code: Imidazole glycerol phosphate synthase subunit HisF (254 aa).

Catalysis depends on residues Asp11 and Asp130.

It belongs to the HisA/HisF family. Heterodimer of HisH and HisF.

Its subcellular location is the cytoplasm. The catalysed reaction is 5-[(5-phospho-1-deoxy-D-ribulos-1-ylimino)methylamino]-1-(5-phospho-beta-D-ribosyl)imidazole-4-carboxamide + L-glutamine = D-erythro-1-(imidazol-4-yl)glycerol 3-phosphate + 5-amino-1-(5-phospho-beta-D-ribosyl)imidazole-4-carboxamide + L-glutamate + H(+). It functions in the pathway amino-acid biosynthesis; L-histidine biosynthesis; L-histidine from 5-phospho-alpha-D-ribose 1-diphosphate: step 5/9. IGPS catalyzes the conversion of PRFAR and glutamine to IGP, AICAR and glutamate. The HisF subunit catalyzes the cyclization activity that produces IGP and AICAR from PRFAR using the ammonia provided by the HisH subunit. In Halorhodospira halophila (strain DSM 244 / SL1) (Ectothiorhodospira halophila (strain DSM 244 / SL1)), this protein is Imidazole glycerol phosphate synthase subunit HisF.